We begin with the raw amino-acid sequence, 276 residues long: Dermonecrotic toxin Ls4SicTox-alphaIII1i (276 aa).

The active site involves His-3. Mg(2+) contacts are provided by Glu-23 and Asp-25. The active-site Nucleophile is the His-38. Residues Cys-42 and Cys-48 are joined by a disulfide bond. Residue Asp-82 coordinates Mg(2+).

The protein belongs to the arthropod phospholipase D family. Class I subfamily. It depends on Mg(2+) as a cofactor. Expressed by the venom gland.

It localises to the secreted. The enzyme catalyses an N-(acyl)-sphingosylphosphocholine = an N-(acyl)-sphingosyl-1,3-cyclic phosphate + choline. It catalyses the reaction an N-(acyl)-sphingosylphosphoethanolamine = an N-(acyl)-sphingosyl-1,3-cyclic phosphate + ethanolamine. The catalysed reaction is a 1-acyl-sn-glycero-3-phosphocholine = a 1-acyl-sn-glycero-2,3-cyclic phosphate + choline. It carries out the reaction a 1-acyl-sn-glycero-3-phosphoethanolamine = a 1-acyl-sn-glycero-2,3-cyclic phosphate + ethanolamine. Its function is as follows. Dermonecrotic toxins cleave the phosphodiester linkage between the phosphate and headgroup of certain phospholipids (sphingolipid and lysolipid substrates), forming an alcohol (often choline) and a cyclic phosphate. This toxin acts on sphingomyelin (SM). It may also act on ceramide phosphoethanolamine (CPE), lysophosphatidylcholine (LPC) and lysophosphatidylethanolamine (LPE), but not on lysophosphatidylserine (LPS), and lysophosphatidylglycerol (LPG). It acts by transphosphatidylation, releasing exclusively cyclic phosphate products as second products. Induces dermonecrosis, hemolysis, increased vascular permeability, edema, inflammatory response, and platelet aggregation. In Loxosceles sp. (strain 4 GJB-2008) (Recluse spider), this protein is Dermonecrotic toxin Ls4SicTox-alphaIII1i.